Here is a 403-residue protein sequence, read N- to C-terminus: Tyrosine--tRNA ligase (403 aa).

Residues 45-54 (PTAPDLHLGH) carry the 'HIGH' region motif. The short motif at 229 to 233 (KMSKS) is the 'KMSKS' region element. Lys-232 contributes to the ATP binding site. The S4 RNA-binding domain occupies 341–402 (VALCRLLAEA…GKRRFARITF (62 aa)).

This sequence belongs to the class-I aminoacyl-tRNA synthetase family. TyrS type 2 subfamily. In terms of assembly, homodimer.

Its subcellular location is the cytoplasm. The catalysed reaction is tRNA(Tyr) + L-tyrosine + ATP = L-tyrosyl-tRNA(Tyr) + AMP + diphosphate + H(+). Functionally, catalyzes the attachment of tyrosine to tRNA(Tyr) in a two-step reaction: tyrosine is first activated by ATP to form Tyr-AMP and then transferred to the acceptor end of tRNA(Tyr). The protein is Tyrosine--tRNA ligase of Geobacter sulfurreducens (strain ATCC 51573 / DSM 12127 / PCA).